We begin with the raw amino-acid sequence, 246 residues long: 14-3-3 protein eta (246 aa).

Glycine 2 carries the N-acetylglycine modification. Phosphoserine is present on residues serine 25 and serine 59.

The protein belongs to the 14-3-3 family. Homodimer. Interacts with many nuclear hormone receptors and cofactors including AR, ESR1, ESR2, MC2R, NR3C1, NRIP1, PPARBP and THRA. Interacts with ABL1 (phosphorylated form); the interaction retains it in the cytoplasm. Weakly interacts with CDKN1B. Interacts with ARHGEF28 and CDK16. Interacts with GAB2. Interacts with KCNK18 in a phosphorylation-dependent manner. Interacts with SAMSN1. Interacts with the 'Ser-241' phosphorylated form of PDPK1. Interacts with the 'Thr-369' phosphorylated form of DAPK2. Interacts with PI4KB, TBC1D22A and TBC1D22B. Interacts with SLITRK1. Interacts with MEFV. In terms of processing, phosphorylated on Ser-59 by protein kinase C delta type catalytic subunit in a sphingosine-dependent fashion.

The protein localises to the cytoplasm. Adapter protein implicated in the regulation of a large spectrum of both general and specialized signaling pathways. Binds to a large number of partners, usually by recognition of a phosphoserine or phosphothreonine motif. Binding generally results in the modulation of the activity of the binding partner. Negatively regulates the kinase activity of PDPK1. This Bos taurus (Bovine) protein is 14-3-3 protein eta (YWHAH).